A 391-amino-acid chain; its full sequence is Succinyl-diaminopimelate desuccinylase (391 aa).

Histidine 67 provides a ligand contact to Zn(2+). Aspartate 69 is a catalytic residue. Aspartate 101 contributes to the Zn(2+) binding site. Glutamate 135 serves as the catalytic Proton acceptor. Residues glutamate 136, glutamate 164, and histidine 353 each coordinate Zn(2+).

It belongs to the peptidase M20A family. DapE subfamily. As to quaternary structure, homodimer. It depends on Zn(2+) as a cofactor. The cofactor is Co(2+).

It catalyses the reaction N-succinyl-(2S,6S)-2,6-diaminopimelate + H2O = (2S,6S)-2,6-diaminopimelate + succinate. Its pathway is amino-acid biosynthesis; L-lysine biosynthesis via DAP pathway; LL-2,6-diaminopimelate from (S)-tetrahydrodipicolinate (succinylase route): step 3/3. Catalyzes the hydrolysis of N-succinyl-L,L-diaminopimelic acid (SDAP), forming succinate and LL-2,6-diaminopimelate (DAP), an intermediate involved in the bacterial biosynthesis of lysine and meso-diaminopimelic acid, an essential component of bacterial cell walls. The sequence is that of Succinyl-diaminopimelate desuccinylase from Rickettsia bellii (strain OSU 85-389).